Here is a 793-residue protein sequence, read N- to C-terminus: Putative glutamate--cysteine ligase 2-3 (793 aa).

A carboxylate-amine ligase region spans residues 1-407 (MLASDPRKVG…RFWDRGDTAD (407 aa)). The segment at 367 to 390 (TEHLPDVEVPPPREPGPKSTGAGR) is disordered. The peptidase M20 stretch occupies residues 408–793 (MTWTESTELD…ALTRLEDQSG (386 aa)).

The protein in the C-terminal section; belongs to the glutamate--cysteine ligase type 2 family. YbdK subfamily.

The enzyme catalyses L-cysteine + L-glutamate + ATP = gamma-L-glutamyl-L-cysteine + ADP + phosphate + H(+). In terms of biological role, ATP-dependent carboxylate-amine ligase which exhibits weak glutamate--cysteine ligase activity. The polypeptide is Putative glutamate--cysteine ligase 2-3 (Rhodococcus jostii (strain RHA1)).